A 158-amino-acid polypeptide reads, in one-letter code: Protein-export protein SecB (158 aa).

This sequence belongs to the SecB family. Homotetramer, a dimer of dimers. One homotetramer interacts with 1 SecA dimer.

Its subcellular location is the cytoplasm. In terms of biological role, one of the proteins required for the normal export of preproteins out of the cell cytoplasm. It is a molecular chaperone that binds to a subset of precursor proteins, maintaining them in a translocation-competent state. It also specifically binds to its receptor SecA. The sequence is that of Protein-export protein SecB from Rhodopseudomonas palustris (strain HaA2).